The chain runs to 485 residues: Glycogen synthase (485 aa).

Lys-15 provides a ligand contact to ADP-alpha-D-glucose.

This sequence belongs to the glycosyltransferase 1 family. Bacterial/plant glycogen synthase subfamily.

It catalyses the reaction [(1-&gt;4)-alpha-D-glucosyl](n) + ADP-alpha-D-glucose = [(1-&gt;4)-alpha-D-glucosyl](n+1) + ADP + H(+). Its pathway is glycan biosynthesis; glycogen biosynthesis. In terms of biological role, synthesizes alpha-1,4-glucan chains using ADP-glucose. The sequence is that of Glycogen synthase from Geobacillus thermodenitrificans (strain NG80-2).